The primary structure comprises 990 residues: Pro-apoptotic serine protease NMA111 (990 aa).

A disordered region spans residues 1 to 32 (MSVTNSNRKRSLSEVSEGSDPEAPAKTRNSYT). A serine protease region spans residues 73-263 (VVSIHFSQVA…LPLDRILRAL (191 aa)). Active-site charge relay system residues include histidine 111, aspartate 142, and serine 225. PDZ domains are found at residues 290-368 (RRLG…QRGG) and 758-843 (SILT…VREG).

The protein belongs to the peptidase S1C family.

The protein localises to the nucleus. Its function is as follows. Nuclear serine protease which mediates apoptosis. The chain is Pro-apoptotic serine protease NMA111 (NMA111) from Vanderwaltozyma polyspora (strain ATCC 22028 / DSM 70294 / BCRC 21397 / CBS 2163 / NBRC 10782 / NRRL Y-8283 / UCD 57-17) (Kluyveromyces polysporus).